Consider the following 58-residue polypeptide: Keratin-associated protein 21-3 (58 aa).

In terms of assembly, interacts with hair keratins.

Functionally, in the hair cortex, hair keratin intermediate filaments are embedded in an interfilamentous matrix, consisting of hair keratin-associated proteins (KRTAP), which are essential for the formation of a rigid and resistant hair shaft through their extensive disulfide bond cross-linking with abundant cysteine residues of hair keratins. The matrix proteins include the high-sulfur and high-glycine-tyrosine keratins. This Homo sapiens (Human) protein is Keratin-associated protein 21-3 (KRTAP21-3).